Here is a 502-residue protein sequence, read N- to C-terminus: ATP synthase subunit alpha (502 aa).

169-176 (GDRQTGKT) lines the ATP pocket.

The protein belongs to the ATPase alpha/beta chains family. In terms of assembly, F-type ATPases have 2 components, CF(1) - the catalytic core - and CF(0) - the membrane proton channel. CF(1) has five subunits: alpha(3), beta(3), gamma(1), delta(1), epsilon(1). CF(0) has three main subunits: a(1), b(2) and c(9-12). The alpha and beta chains form an alternating ring which encloses part of the gamma chain. CF(1) is attached to CF(0) by a central stalk formed by the gamma and epsilon chains, while a peripheral stalk is formed by the delta and b chains.

The protein localises to the cell membrane. It catalyses the reaction ATP + H2O + 4 H(+)(in) = ADP + phosphate + 5 H(+)(out). Its function is as follows. Produces ATP from ADP in the presence of a proton gradient across the membrane. The alpha chain is a regulatory subunit. This chain is ATP synthase subunit alpha, found in Staphylococcus aureus (strain bovine RF122 / ET3-1).